We begin with the raw amino-acid sequence, 396 residues long: Inhibitory POU protein (396 aa).

The POU-IV box motif lies at 86-95; the sequence is RAEALAAVDI. A POU-specific domain is found at 222-299; it reads DTDTDPRELE…ILQAWLEEAE (78 aa). A disordered region spans residues 302–328; that stretch reads AKNKRRDPDAPSVLPAGEKKRKRTSIA. The homeobox; atypical DNA-binding region spans 320–377; that stretch reads KKRKRTSIAAPEKRSLEAYFAVQPRPSGEKIAAIAEKLDLKKNVVRVWFCNQRQKQKR.

Belongs to the POU transcription factor family. Class-4 subfamily. As to expression, coexpressed with vvl in overlapping subsets of neurons in the embryonic central nervous system. Expressed in olfactory neurons.

It is found in the nucleus. Its function is as follows. Modulates gene transcription; simultaneously generates both a specific activator and an inhibitor of gene transcription, capable of modulating two distinct regulatory programs during neural development. Has a role in olfactory behavior. This Drosophila melanogaster (Fruit fly) protein is Inhibitory POU protein (acj6).